A 514-amino-acid chain; its full sequence is Cytidine and dCMP deaminase domain-containing protein 1 (514 aa).

Polar residues-rich tracts occupy residues 1–11 (MKEAGQMQNLE) and 18–27 (SVSTQTGSMT). 2 disordered regions span residues 1 to 27 (MKEA…GSMT) and 55 to 83 (RQKS…TDKR). Over residues 59–83 (QKNEEGKHGPLGDNEERTRVSTDKR) the composition is skewed to basic and acidic residues. Residues 70–168 (GDNEERTRVS…SLLTEASSSE (99 aa)) form the CMP/dCMP-type deaminase 1 domain. Residues His109, Cys134, and Cys137 each coordinate Zn(2+). A Nuclear export signal motif is present at residues 271–283 (NLRQNMKDLILLL). Residues 317-482 (EIARHCMVQA…LNPSGAYGLE (166 aa)) form the CMP/dCMP-type deaminase 2 domain. Residue His398 coordinates Zn(2+). Catalysis depends on Glu400, which acts as the Proton donor. The Zn(2+) site is built by Cys426 and Cys429. The disordered stretch occupies residues 480-514 (GLEQNEPERRENGVLRPVPQKEEQHQDKKLRLGIH). Over residues 485–514 (EPERRENGVLRPVPQKEEQHQDKKLRLGIH) the composition is skewed to basic and acidic residues. A Bipartite nuclear localization signal motif is present at residues 488–510 (RRENGVLRPVPQKEEQHQDKKLR).

Belongs to the cytidine and deoxycytidylate deaminase family. It depends on Zn(2+) as a cofactor. In terms of tissue distribution, widely expressed. Expressed at high levels in the testis.

It localises to the cytoplasm. It is found in the nucleus. The enzyme catalyses 2'-deoxycytidine + H2O + H(+) = 2'-deoxyuridine + NH4(+). It carries out the reaction cytidine + H2O + H(+) = uridine + NH4(+). Catalyzes the deamination of cytidine and deoxycytidine into uridine and deoxyuridine, respectively. May play an important role in testicular development and spermatogenesis. This chain is Cytidine and dCMP deaminase domain-containing protein 1 (CDADC1), found in Homo sapiens (Human).